A 979-amino-acid chain; its full sequence is MVLNAPILKSNEQQVLNQKSQKLSSFAPRHIGPNSDDIQQMLKVLGFPSLDALIDKTVPQTIRLKQPLKLPEAESEYAALASLKKIAAKNQVFRSYIGMGYYDTITPLVIGRNILENPGWYTAYTPYQPEIAQGRLEALLNFQTLIIDLTGLEIANASLLDEATAAAEAMSLSYGVSKNQANAYFVSHDCHPQTIDVLQTRAKPLGINIIVGDHQTFDFDRAIFGAVLQYPASDGTIYDYRAFIEKAHAKGALVTVAADPLSLTLLTPPGEFGADIAVGSTQRFGIPLGFGGPHAAYFATKEEYKRLVPGRIVGVSKDAQGKPALRLALQTREQHIRREKATSNICTAQVLLAVMASMYAVYHGPDGLKQIAENIHQLTLMLAAGLKHLGYKISSEHFFDTLRVELGTRSLEVILEACQARNINLRIFDDTAVGISVDETTTADDLIELFEIFAAPDSLLFGFKEIGDLIAARRKSSLQNSTFARTSNYLTHPVFNRYHSETELLRYLHKLESKDLSLTTSMIPLGSCTMKLNATAEMIPVTWEEFGKIHPFAPASQTQGYQILFQQLEAWLAEITGFAGISLQPNAGSQGEYAGLLVIRQYHENRGEAHRNVCLIPTSAHGTNPASAVMCGMKVVAVACDSQGNIDVDDLKAKAEKHSHELAALMVTYPSTHGVFEEPIQEICAVVHSHGGQVYMDGANMNAQVGICRPGDIGADVCHLNLHKTFCIPHGGGGPGMGPIGVASHLVPFLPGHPVVTINDSTQHSHIGAVAAAPWGSASILVISWMYIAMMGADGLTQATKVAILNANYIAKKLESYYPVLYQGKNGLVAHECILDLRSLKKSAAIEIDDVAKRLMDYGFHAPTVSWPVGGTIMVEPTESESKQELDRFCDALIAIRQEIAEIEVGKVDAQDNVLKNAPHTAESLITGEWQHPYSREQAAYPAPWTREYKFWPAVGRIDAAFGDRNFVCSCLPMDAYSS.

An N6-(pyridoxal phosphate)lysine modification is found at lysine 724.

The protein belongs to the GcvP family. As to quaternary structure, the glycine cleavage system is composed of four proteins: P, T, L and H. The cofactor is pyridoxal 5'-phosphate.

The enzyme catalyses N(6)-[(R)-lipoyl]-L-lysyl-[glycine-cleavage complex H protein] + glycine + H(+) = N(6)-[(R)-S(8)-aminomethyldihydrolipoyl]-L-lysyl-[glycine-cleavage complex H protein] + CO2. Functionally, the glycine cleavage system catalyzes the degradation of glycine. The P protein binds the alpha-amino group of glycine through its pyridoxal phosphate cofactor; CO(2) is released and the remaining methylamine moiety is then transferred to the lipoamide cofactor of the H protein. The polypeptide is Glycine dehydrogenase (decarboxylating) (Nostoc punctiforme (strain ATCC 29133 / PCC 73102)).